A 683-amino-acid chain; its full sequence is Probable metal-nicotianamine transporter YSL3 (683 aa).

14 helical membrane-spanning segments follow: residues 29–49, 58–78, 97–117, 142–162, 204–224, 265–285, 309–329, 372–392, 404–424, 448–468, 490–510, 553–573, 595–615, and 628–648; these read LVTPRAMAVAVVLSVVICFVG, IVPALNMPASILSFFLLKWLI, MFLLTCIITCLNLALTSGFAT, HVPIGKWIVYLFLVGMTGVLI, VATIFKVFFGSFSWSMFQWFY, IVNFGLFFGAIISWGFLYPFL, VFISVTLIITDGMINFLTLIT, IPIPVPVAAYITCAAISTIAI, LAVLYMVIPVVTFCNTYATGL, PGAVVASLLASGVIVAALHIS, TGQIFGVAVGSILCPCVFLAF, CMTFCVVAFCVTVIIDAVVLV, FFAGSYFTIDMCVGSLLLLAW, and SAVAAGLICGEGLFTLPSALL.

This sequence belongs to the YSL (TC 2.A.67.2) family.

The protein resides in the membrane. May be involved in the transport of nicotianamine-chelated metals. This is Probable metal-nicotianamine transporter YSL3 (YSL3) from Oryza sativa subsp. japonica (Rice).